Here is a 407-residue protein sequence, read N- to C-terminus: uncharacterized protein (407 aa).

The 250-residue stretch at methionine 1–leucine 250 folds into the EAL domain.

This is an uncharacterized protein from Bacillus subtilis (strain 168).